A 147-amino-acid chain; its full sequence is MAAQRLGKRVLSKLQSPSRARGPGGSPSGLQKRHARVTVKYDRRELQRRLDVEKWIDGRLEELYRGREADMPDEVNIDELLELDSEEERCRKIRGLLEACLNPTEDFVQELLAKLRGLHKQPGFPQPSPSDDPSLSPRQDPAHTAPP.

Residues 1–11 (MAAQRLGKRVL) are compositionally biased toward basic residues. Residues 1–37 (MAAQRLGKRVLSKLQSPSRARGPGGSPSGLQKRHARV) are disordered. S26 is modified (phosphoserine). An inhibitory region spans residues 35 to 120 (ARVTVKYDRR…LLAKLRGLHK (86 aa)). The residue at position 38 (T38) is a Phosphothreonine. Residues 118-147 (LHKQPGFPQPSPSDDPSLSPRQDPAHTAPP) form a disordered region. 3 positions are modified to phosphoserine: S128, S134, and S136.

Belongs to the PP1 inhibitor family.

The protein resides in the cytoplasm. In terms of biological role, inhibitor of PPP1CA. Has over 1000-fold higher inhibitory activity when phosphorylated, creating a molecular switch for regulating the phosphorylation status of PPP1CA substrates and smooth muscle contraction. The sequence is that of Protein phosphatase 1 regulatory subunit 14A (Ppp1r14a) from Rattus norvegicus (Rat).